A 567-amino-acid polypeptide reads, in one-letter code: Probable diguanylate cyclase DgcQ (567 aa).

2 helical membrane passes run 20–40 (FGPGHVVNTCFLIVMLFSTLL) and 357–377 (IALTLLWGLFTAMLLISWGVI). In terms of domain architecture, GGDEF spans 425 to 560 (QPFSVIQLDL…GRNRICASDA (136 aa)). Aspartate 433 is a Mg(2+) binding site. The substrate site is built by asparagine 441, histidine 446, and aspartate 450. Position 476 (glutamate 476) interacts with Mg(2+). The Proton acceptor role is filled by glutamate 476.

Homodimer. Requires Mg(2+) as cofactor.

The protein resides in the cell inner membrane. It carries out the reaction 2 GTP = 3',3'-c-di-GMP + 2 diphosphate. It participates in glycan metabolism; bacterial cellulose biosynthesis. It functions in the pathway purine metabolism; 3',5'-cyclic di-GMP biosynthesis. Its function is as follows. Catalyzes the synthesis of cyclic-di-GMP (c-di-GMP) via the condensation of 2 GTP molecules. Cyclic-di-GMP is a second messenger which controls cell surface-associated traits in bacteria. Involved in the regulation of cellulose production. In Salmonella typhi, this protein is Probable diguanylate cyclase DgcQ.